The following is a 132-amino-acid chain: Prefoldin subunit alpha (132 aa).

Belongs to the prefoldin subunit alpha family. In terms of assembly, heterohexamer of two alpha and four beta subunits.

The protein localises to the cytoplasm. Its function is as follows. Molecular chaperone capable of stabilizing a range of proteins. Seems to fulfill an ATP-independent, HSP70-like function in archaeal de novo protein folding. This Pyrobaculum islandicum (strain DSM 4184 / JCM 9189 / GEO3) protein is Prefoldin subunit alpha.